The chain runs to 179 residues: ATP synthase subunit delta (179 aa).

The protein belongs to the ATPase delta chain family. In terms of assembly, F-type ATPases have 2 components, F(1) - the catalytic core - and F(0) - the membrane proton channel. F(1) has five subunits: alpha(3), beta(3), gamma(1), delta(1), epsilon(1). F(0) has three main subunits: a(1), b(2) and c(10-14). The alpha and beta chains form an alternating ring which encloses part of the gamma chain. F(1) is attached to F(0) by a central stalk formed by the gamma and epsilon chains, while a peripheral stalk is formed by the delta and b chains.

It is found in the cell inner membrane. F(1)F(0) ATP synthase produces ATP from ADP in the presence of a proton or sodium gradient. F-type ATPases consist of two structural domains, F(1) containing the extramembraneous catalytic core and F(0) containing the membrane proton channel, linked together by a central stalk and a peripheral stalk. During catalysis, ATP synthesis in the catalytic domain of F(1) is coupled via a rotary mechanism of the central stalk subunits to proton translocation. Its function is as follows. This protein is part of the stalk that links CF(0) to CF(1). It either transmits conformational changes from CF(0) to CF(1) or is implicated in proton conduction. The polypeptide is ATP synthase subunit delta (Anaeromyxobacter dehalogenans (strain 2CP-1 / ATCC BAA-258)).